The sequence spans 445 residues: Ubiquitin carboxyl-terminal hydrolase MINDY-3 (445 aa).

Cysteine 51 serves as the catalytic Nucleophile. Serine 125 bears the Phosphoserine mark. Histidine 287 acts as the Proton acceptor in catalysis.

The protein belongs to the MINDY deubiquitinase family. FAM188 subfamily. In terms of assembly, interacts with COPS5. Widely expressed with high levels in heart, skeletal muscle, and kidney, and low levels in liver and brain. Also expressed in lung (at protein level).

The protein localises to the nucleus. It carries out the reaction Thiol-dependent hydrolysis of ester, thioester, amide, peptide and isopeptide bonds formed by the C-terminal Gly of ubiquitin (a 76-residue protein attached to proteins as an intracellular targeting signal).. In terms of biological role, hydrolase that can remove 'Lys-48'-linked conjugated ubiquitin from proteins. The chain is Ubiquitin carboxyl-terminal hydrolase MINDY-3 from Homo sapiens (Human).